Reading from the N-terminus, the 173-residue chain is RNA pyrophosphohydrolase (173 aa).

One can recognise a Nudix hydrolase domain in the interval 6–149 (GFRANVGIIL…KRSVYRRALQ (144 aa)). Residues 38-59 (GGIDRGETPMDAMYRELWEEVG) carry the Nudix box motif.

This sequence belongs to the Nudix hydrolase family. RppH subfamily. Requires a divalent metal cation as cofactor.

Accelerates the degradation of transcripts by removing pyrophosphate from the 5'-end of triphosphorylated RNA, leading to a more labile monophosphorylated state that can stimulate subsequent ribonuclease cleavage. This chain is RNA pyrophosphohydrolase, found in Psychrobacter cryohalolentis (strain ATCC BAA-1226 / DSM 17306 / VKM B-2378 / K5).